The following is an 838-amino-acid chain: Pentatricopeptide repeat-containing protein At4g19440, chloroplastic (838 aa).

The N-terminal 32 residues, 1-32 (MAALLYFPKISSQMTSSHFISFSPMDLRRLSR), are a transit peptide targeting the chloroplast. PPR repeat units lie at residues 238-268 (SKTTCNILLTSLVRANEFQKCCEAFDVVCKG), 272-306 (DVYLFTTAINAFCKGGKVEEAVKLFSKMEEAGVAP), 307-341 (NVVTFNTVIDGLGMCGRYDEAFMFKEKMVERGMEP), 342-376 (TLITYSILVKGLTRAKRIGDAYFVLKEMTKKGFPP), 377-411 (NVIVYNNLIDSFIEAGSLNKAIEIKDLMVSKGLSL), 412-446 (TSSTYNTLIKGYCKNGQADNAERLLKEMLSIGFNV), 447-481 (NQGSFTSVICLLCSHLMFDSALRFVGEMLLRNMSP), 482-516 (GGGLLTTLISGLCKHGKHSKALELWFQFLNKGFVV), 517-551 (DTRTSNALLHGLCEAGKLDEAFRIQKEILGRGCVM), 552-586 (DRVSYNTLISGCCGKKKLDEAFMFLDEMVKRGLKP), 587-621 (DNYTYSILICGLFNMNKVEEAIQFWDDCKRNGMLP), 622-656 (DVYTYSVMIDGCCKAERTEEGQEFFDEMMSKNVQP), 657-691 (NTVVYNHLIRAYCRSGRLSMALELREDMKHKGISP), 692-726 (NSATYTSLIKGMSIISRVEEAKLLFEEMRMEGLEP), 727-761 (NVFHYTALIDGYGKLGQMVKVECLLREMHSKNVHP), and 762-796 (NKITYTVMIGGYARDGNVTEASRLLNEMREKGIVP).

Belongs to the PPR family. P subfamily.

Its subcellular location is the plastid. It is found in the chloroplast. This is Pentatricopeptide repeat-containing protein At4g19440, chloroplastic from Arabidopsis thaliana (Mouse-ear cress).